The sequence spans 186 residues: MKLIVGLGNPGDEYDKTRHNLGFMVIDKIAEKLNVKLDKEKFNGIFYKGENYIISKPLTYMNNSGNFVYDIKNFFDIEIDNIIIIYDEIDLKVGQASIKIKGSANGQRGMQSIIEKLKTENIKRIKIGVSRPLYEPVSSYILKKIPENEKETFEKVIDELADKLLTYIFNDFKTFINVSKLKNSKK.

Position 14 (Y14) interacts with tRNA. Catalysis depends on H19, which acts as the Proton acceptor. Residues Y60 and N62 each coordinate tRNA.

This sequence belongs to the PTH family. Monomer.

The protein resides in the cytoplasm. It catalyses the reaction an N-acyl-L-alpha-aminoacyl-tRNA + H2O = an N-acyl-L-amino acid + a tRNA + H(+). In terms of biological role, hydrolyzes ribosome-free peptidyl-tRNAs (with 1 or more amino acids incorporated), which drop off the ribosome during protein synthesis, or as a result of ribosome stalling. Its function is as follows. Catalyzes the release of premature peptidyl moieties from peptidyl-tRNA molecules trapped in stalled 50S ribosomal subunits, and thus maintains levels of free tRNAs and 50S ribosomes. This Mycoplasmopsis pulmonis (strain UAB CTIP) (Mycoplasma pulmonis) protein is Peptidyl-tRNA hydrolase.